Reading from the N-terminus, the 371-residue chain is Chorismate synthase (371 aa).

2 residues coordinate NADP(+): R48 and R54. FMN is bound by residues R131 to S133, N245 to A246, G290, K305 to S309, and R331.

Belongs to the chorismate synthase family. Homotetramer. FMNH2 serves as cofactor.

The catalysed reaction is 5-O-(1-carboxyvinyl)-3-phosphoshikimate = chorismate + phosphate. It functions in the pathway metabolic intermediate biosynthesis; chorismate biosynthesis; chorismate from D-erythrose 4-phosphate and phosphoenolpyruvate: step 7/7. Functionally, catalyzes the anti-1,4-elimination of the C-3 phosphate and the C-6 proR hydrogen from 5-enolpyruvylshikimate-3-phosphate (EPSP) to yield chorismate, which is the branch point compound that serves as the starting substrate for the three terminal pathways of aromatic amino acid biosynthesis. This reaction introduces a second double bond into the aromatic ring system. The protein is Chorismate synthase of Mesorhizobium japonicum (strain LMG 29417 / CECT 9101 / MAFF 303099) (Mesorhizobium loti (strain MAFF 303099)).